Consider the following 234-residue polypeptide: Sugar fermentation stimulation protein A (234 aa).

Positions 201–220 (LLSEAQQRGVEILAYKAEIS) form a DNA-binding region, H-T-H motif.

This sequence belongs to the SfsA family.

In terms of biological role, binds to DNA non-specifically. Could be a regulatory factor involved in maltose metabolism. In Shigella flexneri serotype 5b (strain 8401), this protein is Sugar fermentation stimulation protein A.